The following is a 346-amino-acid chain: MDYKTAGVDVEAGRAFVNRIRKSVEATHRPEVVGGLGGFGGLMRLPAGLKKPLLVSGTDGVGTKLELAQDHGGHHNVGIDLVAMCVNDVITSGAEPLFFLDYMATGALSPEAMATVVEGIAEGCRGSGCALLGGETAEMPGFYPSGRYDLAGFCVAVVEEEQLIDGRQIRAGDRILGIASSGIHSNGFSLVRRVLTHAGANAETTFGPSNQPLIESLLTPTQLYGRLVKTLLETGTPIHGMAHITGGGLPENLPRCLPEGLQAIVTPSSWTRPAIYDWLQSHGDIPERDLWHTFNLGIGYCLIVPEEGVSIAEKACESEGMQAWTIGRIEASSGGDGKGSVLGLPA.

This sequence belongs to the AIR synthase family.

The protein localises to the cytoplasm. It catalyses the reaction 2-formamido-N(1)-(5-O-phospho-beta-D-ribosyl)acetamidine + ATP = 5-amino-1-(5-phospho-beta-D-ribosyl)imidazole + ADP + phosphate + H(+). Its pathway is purine metabolism; IMP biosynthesis via de novo pathway; 5-amino-1-(5-phospho-D-ribosyl)imidazole from N(2)-formyl-N(1)-(5-phospho-D-ribosyl)glycinamide: step 2/2. The protein is Phosphoribosylformylglycinamidine cyclo-ligase of Synechococcus sp. (strain CC9311).